Reading from the N-terminus, the 195-residue chain is Glycine-rich protein A3 (195 aa).

Disordered regions lie at residues 23 to 103 and 159 to 182; these read AGGG…GVAG and VMES…GSNL. Gly residues predominate over residues 47–77; it reads PAGGGYPPQGYPPAGGGYPPQGYPPAGGGYP. The span at 82–94 shows a compositional bias: low complexity; it reads PPAGHHSGSSAPH. Residues 163–175 are compositionally biased toward basic and acidic residues; that stretch reads LSRESTGRARSTD.

In Daucus carota (Wild carrot), this protein is Glycine-rich protein A3.